We begin with the raw amino-acid sequence, 230 residues long: Small ribosomal subunit protein uS3 (230 aa).

Positions 39-107 (VREYLFKRLK…PVHINIEEVR (69 aa)) constitute a KH type-2 domain.

This sequence belongs to the universal ribosomal protein uS3 family. In terms of assembly, part of the 30S ribosomal subunit. Forms a tight complex with proteins S10 and S14.

Functionally, binds the lower part of the 30S subunit head. Binds mRNA in the 70S ribosome, positioning it for translation. This Alcanivorax borkumensis (strain ATCC 700651 / DSM 11573 / NCIMB 13689 / SK2) protein is Small ribosomal subunit protein uS3.